Consider the following 459-residue polypeptide: MGPLCAVCESPTAFTLHFGGRCCKACAAFFRRTIALDLKYECAADDPCEIHFKFPGMRLVCRECRLRKCYSAGMRSELVRSKRENFACTRRKDSRNNSDAAPNSNSPSTRQSSSPEEMDDWSFQMFEEKPKIEDLPLTPSISHPPLPTQLMPEESSRTSSFDGGYCSSYPSSSAATHPSPPGMLYSIENNSILQYYHSMETGLCSKRRIMYTNTGMDFILDTHANLQCPFTVNDLRPHDYRNFRGMLRHDFVMLFDYATRFPEFNSFTSHEKNMFYRQIVAVDFILSSAYYTAKLGQAHRQMVLTNGEYLNMDPLPMSGNEIDARRYFDCDEDFSKYRALMPMHIAIWEESIVPFSKLNVTFEEFCLLKALTVWQATYFKLTENGREKCRRQRNIIIGFLSKMCHSPGGGGEHRVGELLMSMNYLRESAQKLTTSYVMLTVFNVLNCDSMLHEMLNFQY.

The segment at residues 2-81 is a DNA-binding region (nuclear receptor); it reads GPLCAVCESP…AGMRSELVRS (80 aa). 2 NR C4-type zinc fingers span residues 5–26 and 42–69; these read CAVC…CKAC and CAAD…LRKC. Disordered regions lie at residues 90 to 119 and 134 to 162; these read RRKD…EEMD and DLPL…SSFD. Residues 97-115 are compositionally biased toward low complexity; sequence NSDAAPNSNSPSTRQSSSP. In terms of domain architecture, NR LBD spans 188 to 458; that stretch reads ENNSILQYYH…SMLHEMLNFQ (271 aa).

This sequence belongs to the nuclear hormone receptor family.

The protein localises to the nucleus. In terms of biological role, orphan nuclear receptor. The protein is Nuclear hormone receptor family member nhr-11 (nhr-11) of Caenorhabditis elegans.